A 505-amino-acid chain; its full sequence is Glutamate--tRNA ligase (505 aa).

A 'HIGH' region motif is present at residues 12-22 (PSPTGDPHVGT). Residues 253–257 (KLSKR) carry the 'KMSKS' region motif. Lysine 256 contributes to the ATP binding site.

It belongs to the class-I aminoacyl-tRNA synthetase family. Glutamate--tRNA ligase type 1 subfamily. Monomer.

The protein resides in the cytoplasm. The enzyme catalyses tRNA(Glu) + L-glutamate + ATP = L-glutamyl-tRNA(Glu) + AMP + diphosphate. Its function is as follows. Catalyzes the attachment of glutamate to tRNA(Glu) in a two-step reaction: glutamate is first activated by ATP to form Glu-AMP and then transferred to the acceptor end of tRNA(Glu). The sequence is that of Glutamate--tRNA ligase from Chlamydia caviae (strain ATCC VR-813 / DSM 19441 / 03DC25 / GPIC) (Chlamydophila caviae).